Reading from the N-terminus, the 20-residue chain is Cupiennin-6f (20 aa).

As to expression, expressed by the venom gland.

It localises to the secreted. This chain is Cupiennin-6f, found in Cupiennius salei (American wandering spider).